Here is a 502-residue protein sequence, read N- to C-terminus: Probable glycine dehydrogenase (decarboxylating) subunit 2 (502 aa).

An N6-(pyridoxal phosphate)lysine modification is found at Lys-273.

It belongs to the GcvP family. C-terminal subunit subfamily. The glycine cleavage system is composed of four proteins: P, T, L and H. In this organism, the P 'protein' is a heterodimer of two subunits. Requires pyridoxal 5'-phosphate as cofactor.

The catalysed reaction is N(6)-[(R)-lipoyl]-L-lysyl-[glycine-cleavage complex H protein] + glycine + H(+) = N(6)-[(R)-S(8)-aminomethyldihydrolipoyl]-L-lysyl-[glycine-cleavage complex H protein] + CO2. Functionally, the glycine cleavage system catalyzes the degradation of glycine. The P protein binds the alpha-amino group of glycine through its pyridoxal phosphate cofactor; CO(2) is released and the remaining methylamine moiety is then transferred to the lipoamide cofactor of the H protein. The sequence is that of Probable glycine dehydrogenase (decarboxylating) subunit 2 from Thermococcus gammatolerans (strain DSM 15229 / JCM 11827 / EJ3).